A 192-amino-acid chain; its full sequence is Fe/S biogenesis protein NfuA (192 aa).

The [4Fe-4S] cluster site is built by Cys150 and Cys153.

Belongs to the NfuA family. Homodimer. It depends on [4Fe-4S] cluster as a cofactor.

In terms of biological role, involved in iron-sulfur cluster biogenesis. Binds a 4Fe-4S cluster, can transfer this cluster to apoproteins, and thereby intervenes in the maturation of Fe/S proteins. Could also act as a scaffold/chaperone for damaged Fe/S proteins. This chain is Fe/S biogenesis protein NfuA, found in Ruthia magnifica subsp. Calyptogena magnifica.